Here is a 152-residue protein sequence, read N- to C-terminus: uncharacterized protein (152 aa).

This is an uncharacterized protein from Rickettsia prowazekii (strain Madrid E).